The primary structure comprises 731 residues: E3 ubiquitin-protein ligase SMURF1 (731 aa).

A C2 domain is found at 1–120 (MSNPGTRRNG…TGYQRLDLCK (120 aa)). A Phosphoserine modification is found at serine 200. The tract at residues 216-237 (EVRGPLQTPQNRPHGHQSPELP) is disordered. 2 consecutive WW domains span residues 234-267 (PELPEGYEQRTTVQGQVYFLHTQTGVSTWHDPRI) and 280-313 (GPLPPGWEVRSTVSGRIYFVDHNNRTTQFTDPRL). Glycyl lysine isopeptide (Lys-Gly) (interchain with G-Cter in ubiquitin) cross-links involve residues lysine 355 and lysine 357. Residues 394-731 (RPKDLKKRLM…VEETCGFAVE (338 aa)) enclose the HECT domain. The active-site Glycyl thioester intermediate is cysteine 699.

In terms of assembly, interacts with TRAF4. Interacts (via HECT domain) with FBXL15 (via LRR repeats). Interacts with SMAD7 and TGFBR1; SMAD7 recruits SMURF1 to TGFBR1 and regulates TGF-beta receptor degradation. Interacts with MAVS; the interaction is mediated by NDFIP1. Auto-ubiquitinated in presence of NDFIP1. Ubiquitinated by the SCF(FBXL15) complex at Lys-355 and Lys-357, leading to its degradation by the proteasome. Lys-357 is the primary ubiquitination site.

Its subcellular location is the cytoplasm. The protein localises to the cell membrane. It catalyses the reaction S-ubiquitinyl-[E2 ubiquitin-conjugating enzyme]-L-cysteine + [acceptor protein]-L-lysine = [E2 ubiquitin-conjugating enzyme]-L-cysteine + N(6)-ubiquitinyl-[acceptor protein]-L-lysine.. It functions in the pathway protein modification; protein ubiquitination. E3 ubiquitin-protein ligase that acts as a negative regulator of BMP signaling pathway. Mediates ubiquitination and degradation of SMAD1 and SMAD5, 2 receptor-regulated SMADs specific for the BMP pathway. Promotes ubiquitination and subsequent proteasomal degradation of TRAF family members and RHOA. Promotes ubiquitination and subsequent proteasomal degradation of MAVS. Acts as an antagonist of TGF-beta signaling by ubiquitinating TGFBR1 and targeting it for degradation. Plays a role in dendrite formation by melanocytes. The protein is E3 ubiquitin-protein ligase SMURF1 (Smurf1) of Mus musculus (Mouse).